A 699-amino-acid polypeptide reads, in one-letter code: Endoplasmic reticulum mannosyl-oligosaccharide 1,2-alpha-mannosidase (699 aa).

At 1–84 (MAACEGRRSG…WKQLSRLQRN (84 aa)) the chain is on the cytoplasmic side. Residues 85 to 105 (MILFLLAFLLFCGLLFYINLA) form a helical; Signal-anchor for type II membrane protein membrane-spanning segment. Residues 106-699 (DHWKALAFRL…AHPLPIWTPA (594 aa)) lie on the Lumenal side of the membrane. The segment at 125–243 (IAGLKPANPP…LPPARTQGTP (119 aa)) is disordered. Positions 176–201 (DLKDGTQEEATKRQEAPVDPRPEGDP) are enriched in basic and acidic residues. Residue E330 is the Proton donor of the active site. D463 is a catalytic residue. A disulfide bridge links C527 with C556. Catalysis depends on E570, which acts as the Proton donor. Residue E599 is part of the active site. Residue T688 coordinates Ca(2+).

This sequence belongs to the glycosyl hydrolase 47 family. The cofactor is Ca(2+). As to expression, widely expressed.

Its subcellular location is the endoplasmic reticulum membrane. It catalyses the reaction N(4)-(alpha-D-Man-(1-&gt;2)-alpha-D-Man-(1-&gt;2)-alpha-D-Man-(1-&gt;3)-[alpha-D-Man-(1-&gt;2)-alpha-D-Man-(1-&gt;3)-[alpha-D-Man-(1-&gt;2)-alpha-D-Man-(1-&gt;6)]-alpha-D-Man-(1-&gt;6)]-beta-D-Man-(1-&gt;4)-beta-D-GlcNAc-(1-&gt;4)-beta-D-GlcNAc)-L-asparaginyl-[protein] (N-glucan mannose isomer 9A1,2,3B1,2,3) + 4 H2O = N(4)-(alpha-D-Man-(1-&gt;3)-[alpha-D-Man-(1-&gt;3)-[alpha-D-Man-(1-&gt;6)]-alpha-D-Man-(1-&gt;6)]-beta-D-Man-(1-&gt;4)-beta-D-GlcNAc-(1-&gt;4)-beta-D-GlcNAc)-L-asparaginyl-[protein] (N-glucan mannose isomer 5A1,2) + 4 beta-D-mannose. The enzyme catalyses N(4)-(alpha-D-Man-(1-&gt;2)-alpha-D-Man-(1-&gt;2)-alpha-D-Man-(1-&gt;3)-[alpha-D-Man-(1-&gt;3)-[alpha-D-Man-(1-&gt;2)-alpha-D-Man-(1-&gt;6)]-alpha-D-Man-(1-&gt;6)]-beta-D-Man-(1-&gt;4)-beta-D-GlcNAc-(1-&gt;4)-beta-D-GlcNAc)-L-asparaginyl-[protein] (N-glucan mannose isomer 8A1,2,3B1,3) + 3 H2O = N(4)-(alpha-D-Man-(1-&gt;3)-[alpha-D-Man-(1-&gt;3)-[alpha-D-Man-(1-&gt;6)]-alpha-D-Man-(1-&gt;6)]-beta-D-Man-(1-&gt;4)-beta-D-GlcNAc-(1-&gt;4)-beta-D-GlcNAc)-L-asparaginyl-[protein] (N-glucan mannose isomer 5A1,2) + 3 beta-D-mannose. Its pathway is protein modification; protein glycosylation. Inhibited by both 1-deoxymannojirimycin (dMNJ) and kifunensine. Functionally, involved in glycoprotein quality control targeting of misfolded glycoproteins for degradation. It primarily trims a single alpha-1,2-linked mannose residue from Man(9)GlcNAc(2) to produce Man(8)GlcNAc(2), but at high enzyme concentrations, as found in the ER quality control compartment (ERQC), it further trims the carbohydrates to Man(5-6)GlcNAc(2). The protein is Endoplasmic reticulum mannosyl-oligosaccharide 1,2-alpha-mannosidase (MAN1B1) of Homo sapiens (Human).